A 1138-amino-acid chain; its full sequence is 2'-5'-oligoadenylate synthase 3 (1138 aa).

At Met-1 the chain carries N-acetylmethionine. The interval 6–341 (TPAGALDKLV…GVLVQPWEGP (336 aa)) is OAS domain 1. Interaction with dsRNA stretches follow at residues 12-56 (DKLV…VIRI) and 185-199 (EPRK…AKLK). Residues 342-462 (GLPRAGILDL…GSRMSPDLSQ (121 aa)) form a linker region. Over residues 370–379 (LAVQSKERSQ) the composition is skewed to basic and acidic residues. Disordered stretches follow at residues 370-403 (LAVQ…NPSA) and 434-459 (TQST…MSPD). The segment covering 447 to 459 (SSISTAGSRMSPD) has biased composition (polar residues). OAS domain regions lie at residues 463–793 (IPSK…PWDV) and 801–1135 (TLAE…WPVK). Ser-855 serves as a coordination point for ATP. Positions 867, 869, and 939 each coordinate Mg(2+). Residues Arg-998, Lys-1001, and Gln-1020 each contribute to the ATP site.

The protein belongs to the 2-5A synthase family. In terms of assembly, monomer. Mg(2+) is required as a cofactor. In terms of tissue distribution, intestine.

The protein localises to the cytoplasm. It localises to the nucleus. The catalysed reaction is 3 ATP = 5'-triphosphoadenylyl-(2'-&gt;5')-adenylyl-(2'-&gt;5')-adenosine + 2 diphosphate. With respect to regulation, produced as a latent enzyme which is activated by dsRNA generated during the course of viral infection. Strongly activated by long dsRNAs at least 50 nucleotides in length. ssRNA does not activate the enzyme. Its function is as follows. Interferon-induced, dsRNA-activated antiviral enzyme which plays a critical role in cellular innate antiviral response. In addition, it may also play a role in other cellular processes such as apoptosis, cell growth, differentiation and gene regulation. Synthesizes preferentially dimers of 2'-5'-oligoadenylates (2-5A) from ATP which then bind to the inactive monomeric form of ribonuclease L (RNase L) leading to its dimerization and subsequent activation. Activation of RNase L leads to degradation of cellular as well as viral RNA, resulting in the inhibition of protein synthesis, thus terminating viral replication. Can mediate the antiviral effect via the classical RNase L-dependent pathway or an alternative antiviral pathway independent of RNase L. The protein is 2'-5'-oligoadenylate synthase 3 (Oas3) of Mus musculus (Mouse).